Consider the following 367-residue polypeptide: 2-aminoethylphosphonate--pyruvate transaminase (367 aa).

Residue lysine 193 is modified to N6-(pyridoxal phosphate)lysine.

This sequence belongs to the class-V pyridoxal-phosphate-dependent aminotransferase family. PhnW subfamily. Homodimer. It depends on pyridoxal 5'-phosphate as a cofactor.

The enzyme catalyses (2-aminoethyl)phosphonate + pyruvate = phosphonoacetaldehyde + L-alanine. In terms of biological role, involved in phosphonate degradation. This is 2-aminoethylphosphonate--pyruvate transaminase from Vibrio cholerae serotype O1 (strain ATCC 39541 / Classical Ogawa 395 / O395).